The primary structure comprises 381 residues: Protein-glutamate methylesterase/protein-glutamine glutaminase 1 (381 aa).

The Response regulatory domain occupies 14–132 (RVMLVDDSAV…DLAGGVDFKS (119 aa)). Aspartate 65 is modified (4-aspartylphosphate). Residues 143-173 (QARRAGARPARPGGPPATRPVIASTSPRTPV) are disordered. Low complexity predominate over residues 144–153 (ARRAGARPAR). The 194-residue stretch at 188–381 (PEPPDIIAIG…PWIMKLAARR (194 aa)) folds into the CheB-type methylesterase domain. Active-site residues include serine 199, histidine 227, and aspartate 323.

This sequence belongs to the CheB family. Phosphorylated by CheA. Phosphorylation of the N-terminal regulatory domain activates the methylesterase activity.

It localises to the cytoplasm. The catalysed reaction is [protein]-L-glutamate 5-O-methyl ester + H2O = L-glutamyl-[protein] + methanol + H(+). It catalyses the reaction L-glutaminyl-[protein] + H2O = L-glutamyl-[protein] + NH4(+). In terms of biological role, involved in chemotaxis. Part of a chemotaxis signal transduction system that modulates chemotaxis in response to various stimuli. Catalyzes the demethylation of specific methylglutamate residues introduced into the chemoreceptors (methyl-accepting chemotaxis proteins or MCP) by CheR. Also mediates the irreversible deamidation of specific glutamine residues to glutamic acid. This is Protein-glutamate methylesterase/protein-glutamine glutaminase 1 from Paramagnetospirillum magneticum (strain ATCC 700264 / AMB-1) (Magnetospirillum magneticum).